We begin with the raw amino-acid sequence, 438 residues long: 3-phosphoshikimate 1-carboxyvinyltransferase (438 aa).

3-phosphoshikimate contacts are provided by K26, S27, and R31. A phosphoenolpyruvate-binding site is contributed by K26. 2 residues coordinate phosphoenolpyruvate: G99 and R127. 3-phosphoshikimate is bound by residues S170, S171, Q172, S199, E314, and H343. Position 172 (Q172) interacts with phosphoenolpyruvate. E314 functions as the Proton acceptor in the catalytic mechanism. Phosphoenolpyruvate-binding residues include R347, R388, and K413.

This sequence belongs to the EPSP synthase family. In terms of assembly, monomer.

It is found in the cytoplasm. The catalysed reaction is 3-phosphoshikimate + phosphoenolpyruvate = 5-O-(1-carboxyvinyl)-3-phosphoshikimate + phosphate. The protein operates within metabolic intermediate biosynthesis; chorismate biosynthesis; chorismate from D-erythrose 4-phosphate and phosphoenolpyruvate: step 6/7. Its function is as follows. Catalyzes the transfer of the enolpyruvyl moiety of phosphoenolpyruvate (PEP) to the 5-hydroxyl of shikimate-3-phosphate (S3P) to produce enolpyruvyl shikimate-3-phosphate and inorganic phosphate. This Mycobacterium sp. (strain MCS) protein is 3-phosphoshikimate 1-carboxyvinyltransferase.